An 85-amino-acid polypeptide reads, in one-letter code: Large ribosomal subunit protein bL27 (85 aa).

A disordered region spans residues 1–20 (MATKKAGGSTRNGRDSEAKR).

It belongs to the bacterial ribosomal protein bL27 family.

The sequence is that of Large ribosomal subunit protein bL27 from Glaesserella parasuis serovar 5 (strain SH0165) (Haemophilus parasuis).